The primary structure comprises 221 residues: MARPSLPCAVVAVLLLALLPTPSTAGDPDLLQDICVADLTSAVKVNGFACKAAVTEDDFYFKGLAAAGNTNNTYGSVVTGANVEKLPGLNTLGVSMSRIDYAPGGLNPPHTHPRATEMVFVLQGTLDVGFITTANKLYTKTISAGDVFVFPRGLLHFQKNNGDTPAAVISAFNSQLPGTQSLAMTLFAASPEVPDGVLTKAFQVGTKEVEKIKSRLAPKKR.

An N-terminal signal peptide occupies residues 1–25; the sequence is MARPSLPCAVVAVLLLALLPTPSTA. Residues cysteine 35 and cysteine 50 are joined by a disulfide bond. Residues 62 to 210 enclose the Cupin type-1 domain; it reads KGLAAAGNTN…AFQVGTKEVE (149 aa). An N-linked (GlcNAc...) asparagine glycan is attached at asparagine 71. Positions 110, 112, 117, and 156 each coordinate Mn(2+).

The protein belongs to the germin family. Oligomer (believed to be a pentamer but probably hexamer).

The protein resides in the secreted. The protein localises to the extracellular space. It is found in the apoplast. Functionally, may play a role in plant defense. Probably has no oxalate oxidase activity even if the active site is conserved. This is Germin-like protein 5-1 from Oryza sativa subsp. japonica (Rice).